Reading from the N-terminus, the 534-residue chain is Serine/threonine-protein kinase 35 (534 aa).

A disordered region spans residues 32-176 (VESHGSLGAQ…AAAARAMDPV (145 aa)). Low complexity-rich tracts occupy residues 39–65 (GAQA…TSRA) and 166–176 (PAAAARAMDPV). The region spanning 202 to 530 (YSLLAEIGRG…FELETRMDQV (329 aa)) is the Protein kinase domain. ATP is bound by residues 208-216 (IGRGSYGVV) and Lys-231. The active-site Proton acceptor is the Asp-360.

Belongs to the protein kinase superfamily. Ser/Thr protein kinase family. As to quaternary structure, interacts with PDLIM1/CLP-36. Autophosphorylated. As to expression, expressed in testis.

The protein resides in the nucleus. Its subcellular location is the nucleolus. It localises to the cytoplasm. The catalysed reaction is L-seryl-[protein] + ATP = O-phospho-L-seryl-[protein] + ADP + H(+). It carries out the reaction L-threonyl-[protein] + ATP = O-phospho-L-threonyl-[protein] + ADP + H(+). The protein is Serine/threonine-protein kinase 35 (STK35) of Homo sapiens (Human).